The primary structure comprises 337 residues: MSRELMVQDSGDTIGNTPLVLLRNISKGLDARIAVKVEYLNPSCSVKDRIAKSMVDEAEKAGTIVPGKTVLVEGTSGNLGIALAHIGKIRGYKVILVMPATMSVERRAMLRAYGAEVILSDPAEGHPGVIKKVEMLVDKLPNAHCLDQFSNPANPAAHYRTTGPEIWRQTEGKVDIVCFGVGSSGTVTGVGRYLREQNPNIEIYPVEPYESSVLSGLPRGPHKIQGIGAGIVPGNVDRSLFTEILRIKSDDAMQMARRLADEEAILGGISSGANVVAAVELASRPENKGKLIVTTVNSFAERYFTTELYSDVLNEVSQLTFSSDDEAMGIAKKYLGL.

The residue at position 47 (lysine 47) is an N6-(pyridoxal phosphate)lysine. Pyridoxal 5'-phosphate-binding positions include asparagine 78, 182–186, and serine 270; that span reads GSSGT.

This sequence belongs to the cysteine synthase/cystathionine beta-synthase family. In terms of assembly, homodimer. Pyridoxal 5'-phosphate serves as cofactor.

It carries out the reaction O-acetyl-L-serine + hydrogen sulfide = L-cysteine + acetate. It functions in the pathway amino-acid biosynthesis; L-cysteine biosynthesis; L-cysteine from L-serine: step 2/2. Functionally, primarily catalyzes the formation of cysteine and acetate from O-acetylserine and hydrogen sulfide. Can also catalyze the formation of cysteine and acetate from S-sulfocysteine and hydrogen sulfide and the formation of cyanoalanine and hydrogen sulfide from either S-sulfocysteine or O-acetylserine and hydrogen cyanide. This Caenorhabditis elegans protein is Cysteine synthase 3.